The chain runs to 276 residues: ARL14 effector protein (276 aa).

A disordered region spans residues 159–183 (QTEFAPESGKREKRKLTKNASASSD). Lysine 176 is covalently cross-linked (Glycyl lysine isopeptide (Lys-Gly) (interchain with G-Cter in SUMO2)). Phosphoserine occurs at positions 182 and 266.

Interacts with ARL14 and MYO1E.

It is found in the cytoplasm. Functionally, through its interaction with ARL14 and MYO1E, may connect MHC class II-containing cytoplasmic vesicles to the actin network and hence controls the movement of these vesicles along the actin cytoskeleton in dendritic cells. The sequence is that of ARL14 effector protein (Arl14ep) from Rattus norvegicus (Rat).